Here is a 99-residue protein sequence, read N- to C-terminus: Small ribosomal subunit protein uS14m (99 aa).

This sequence belongs to the universal ribosomal protein uS14 family.

It is found in the mitochondrion. The polypeptide is Small ribosomal subunit protein uS14m (RPS14) (Marchantia polymorpha (Common liverwort)).